A 353-amino-acid polypeptide reads, in one-letter code: MSLLSETIARIGPLDDAAAAAAQARQDVLTKPQGALGRLEALSVQIAGITGNQRPRLTNPAVIVMAADHGVARRGVSAYPSEVTAQMVLNFLNGGAAINVLARHVGARVIVVDMGVAANLPSHPELINRKMGMGTADFSVEPAMSRTQAQQAVEAGIACANDAIDAGVDILATGDMGIGNTTASSAVVAAITGRPVADVTGRGAGVDDAGLARKIAVIEQALALHRPDPNDGLDVLAKVGGFEIGGLAGVMLGAAARRVPVVIDGFISGAAALIAWTLAPAVQPYLIAAHRSVERGHEAVFTRLDLVPLFDLGMRLGEGTGAVLGMSLCQAACKILDEMATFGEAGVSGKVEN.

Glutamate 318 (proton acceptor) is an active-site residue.

Belongs to the CobT family.

The catalysed reaction is 5,6-dimethylbenzimidazole + nicotinate beta-D-ribonucleotide = alpha-ribazole 5'-phosphate + nicotinate + H(+). The protein operates within nucleoside biosynthesis; alpha-ribazole biosynthesis; alpha-ribazole from 5,6-dimethylbenzimidazole: step 1/2. Its function is as follows. Catalyzes the synthesis of alpha-ribazole-5'-phosphate from nicotinate mononucleotide (NAMN) and 5,6-dimethylbenzimidazole (DMB). The sequence is that of Nicotinate-nucleotide--dimethylbenzimidazole phosphoribosyltransferase from Roseiflexus sp. (strain RS-1).